The following is a 207-amino-acid chain: Urease accessory protein UreG (207 aa).

14 to 21 (GPVGSGKT) is a GTP binding site.

This sequence belongs to the SIMIBI class G3E GTPase family. UreG subfamily. Homodimer. UreD, UreF and UreG form a complex that acts as a GTP-hydrolysis-dependent molecular chaperone, activating the urease apoprotein by helping to assemble the nickel containing metallocenter of UreC. The UreE protein probably delivers the nickel.

It localises to the cytoplasm. Its function is as follows. Facilitates the functional incorporation of the urease nickel metallocenter. This process requires GTP hydrolysis, probably effectuated by UreG. The sequence is that of Urease accessory protein UreG from Chelativorans sp. (strain BNC1).